The chain runs to 383 residues: Chitinase-3-like protein 1 (383 aa).

Residues 1-21 (MGLRASGTGFVVLVLLQSCAA) form the signal peptide. The region spanning 22–383 (YKLICYYTSW…SAVKDVLAEV (362 aa)) is the GH18 domain. Cysteines 26 and 51 form a disulfide. N-linked (GlcNAc...) asparagine glycosylation occurs at Asn-60. Residues 70 to 71 (EW), 97 to 100 (GGWN), Tyr-141, 204 to 207 (LTYD), and Arg-263 contribute to the chitin site. A disulfide bridge links Cys-300 with Cys-364. An important for AKT1 activation and IL8 production region spans residues 324 to 338 (QWVAYDDQESVKNKA). Residue Trp-352 coordinates chitin. An N-linked (GlcNAc...) asparagine glycan is attached at Asn-367.

It belongs to the glycosyl hydrolase 18 family. In terms of assembly, monomer.

It localises to the secreted. The protein resides in the extracellular space. The protein localises to the cytoplasm. Its subcellular location is the perinuclear region. It is found in the endoplasmic reticulum. Functionally, carbohydrate-binding lectin with a preference for chitin. Has no chitinase activity. May play a role in tissue remodeling and in the capacity of cells to respond to and cope with changes in their environment. Plays a role in T-helper cell type 2 (Th2) inflammatory response and IL-13-induced inflammation, regulating allergen sensitization, inflammatory cell apoptosis, dendritic cell accumulation and M2 macrophage differentiation. Facilitates invasion of pathogenic enteric bacteria into colonic mucosa and lymphoid organs. Mediates activation of AKT1 signaling pathway and subsequent IL8 production in colonic epithelial cells. Regulates antibacterial responses in lung by contributing to macrophage bacterial killing, controlling bacterial dissemination and augmenting host tolerance. Also regulates hyperoxia-induced injury, inflammation and epithelial apoptosis in lung. The chain is Chitinase-3-like protein 1 (CHI3L1) from Capra hircus (Goat).